Here is a 431-residue protein sequence, read N- to C-terminus: Mitochondrial distribution and morphology protein 12 (431 aa).

The region spanning 1–431 (MSIDLNWETL…VYPSFWTFLV (431 aa)) is the SMP-LTD domain. Disordered regions lie at residues 68–153 (DFYE…GVST) and 209–289 (QSHT…PKPE). Acidic residues predominate over residues 69–96 (FYEDLDDDDGGSDEDDEGSNSCQTDEEN). Residues 97–113 (EAAKTLRERRKMDRVER) are compositionally biased toward basic and acidic residues. Polar residues predominate over residues 115 to 129 (ANGSSNVSNPPSYTD). A compositionally biased stretch (low complexity) spans 241 to 252 (SASTLAVSSSTT).

It belongs to the MDM12 family. Component of the ER-mitochondria encounter structure (ERMES) or MDM complex, composed of mmm1, mdm10, mdm12 and mdm34. A mmm1 homodimer associates with one molecule of mdm12 on each side in a pairwise head-to-tail manner, and the SMP-LTD domains of mmm1 and mdm12 generate a continuous hydrophobic tunnel for phospholipid trafficking.

Its subcellular location is the mitochondrion outer membrane. It localises to the endoplasmic reticulum membrane. Functionally, component of the ERMES/MDM complex, which serves as a molecular tether to connect the endoplasmic reticulum (ER) and mitochondria. Components of this complex are involved in the control of mitochondrial shape and protein biogenesis, and function in nonvesicular lipid trafficking between the ER and mitochondria. Mdm12 is required for the interaction of the ER-resident membrane protein mmm1 and the outer mitochondrial membrane-resident beta-barrel protein mdm10. The mdm12-mmm1 subcomplex functions in the major beta-barrel assembly pathway that is responsible for biogenesis of all mitochondrial outer membrane beta-barrel proteins, and acts in a late step after the SAM complex. The mdm10-mdm12-mmm1 subcomplex further acts in the TOM40-specific pathway after the action of the mdm12-mmm1 complex. Essential for establishing and maintaining the structure of mitochondria and maintenance of mtDNA nucleoids. This chain is Mitochondrial distribution and morphology protein 12, found in Sclerotinia sclerotiorum (strain ATCC 18683 / 1980 / Ss-1) (White mold).